A 793-amino-acid chain; its full sequence is Kinesin-like protein KIF3C (793 aa).

The region spanning 10 to 365 (ALKVVARCRP…LRFANRAKNI (356 aa)) is the Kinesin motor domain. Residue 97 to 104 (GQTGTGKT) coordinates ATP. 3 disordered regions span residues 251-288 (ERQN…ERPK), 395-423 (EKRG…GYPE), and 756-793 (KVRK…ADHE). Over residues 270-284 (GGSGGGGGSGGGAGG) the composition is skewed to gly residues. The stretch at 376-630 (KDTLLREFQE…QNEQTRELKL (255 aa)) forms a coiled coil. Basic residues predominate over residues 399–413 (MLGKRPRRKSSRGKK). A globular region spans residues 631–793 (KYLIIENFIP…LRPATVADHE (163 aa)).

The protein belongs to the TRAFAC class myosin-kinesin ATPase superfamily. Kinesin family. Kinesin II subfamily. As to quaternary structure, heterodimer of KIF3A and KIF3C.

It is found in the cytoplasm. It localises to the cytoskeleton. Microtubule-based anterograde translocator for membranous organelles. The protein is Kinesin-like protein KIF3C (KIF3C) of Pongo abelii (Sumatran orangutan).